Consider the following 105-residue polypeptide: Large ribosomal subunit protein bL21 (105 aa).

This sequence belongs to the bacterial ribosomal protein bL21 family. As to quaternary structure, part of the 50S ribosomal subunit. Contacts protein L20.

Functionally, this protein binds to 23S rRNA in the presence of protein L20. The chain is Large ribosomal subunit protein bL21 from Blochmanniella pennsylvanica (strain BPEN).